We begin with the raw amino-acid sequence, 101 residues long: Transcription and mRNA export factor SUS1 (101 aa).

It belongs to the ENY2 family. Component of the nuclear pore complex (NPC)-associated TREX-2 complex (transcription and export complex 2), composed of at least SUS1, SAC3, THP1, SEM1, and CDC31. TREX-2 contains 2 SUS1 chains. The TREX-2 complex interacts with the nucleoporin NUP1. Component of the 1.8 MDa SAGA transcription coactivator-HAT complex. SAGA is built of 5 distinct domains with specialized functions. Within the SAGA complex, SUS1, SGF11, SGF73 and UBP8 form an additional subcomplex of SAGA called the DUB module (deubiquitination module). Interacts directly with THP1, SAC3, SGF11, and with the RNA polymerase II.

It localises to the nucleus. Its subcellular location is the nucleoplasm. It is found in the cytoplasm. The protein localises to the P-body. Functionally, involved in mRNA export coupled transcription activation by association with both the TREX-2 and the SAGA complexes. At the promoters, SAGA is required for recruitment of the basal transcription machinery. It influences RNA polymerase II transcriptional activity through different activities such as TBP interaction and promoter selectivity, interaction with transcription activators, and chromatin modification through histone acetylation and deubiquitination. Within the SAGA complex, participates in a subcomplex required for deubiquitination of H2B and for the maintenance of steady-state H3 methylation levels. The TREX-2 complex functions in docking export-competent ribonucleoprotein particles (mRNPs) to the nuclear entrance of the nuclear pore complex (nuclear basket). TREX-2 participates in mRNA export and accurate chromatin positioning in the nucleus by tethering genes to the nuclear periphery. May also be involved in cytoplasmic mRNA decay by interaction with components of P-bodies. The protein is Transcription and mRNA export factor SUS1 of Debaryomyces hansenii (strain ATCC 36239 / CBS 767 / BCRC 21394 / JCM 1990 / NBRC 0083 / IGC 2968) (Yeast).